A 340-amino-acid polypeptide reads, in one-letter code: DNA-directed RNA polymerase subunit alpha (340 aa).

An alpha N-terminal domain (alpha-NTD) region spans residues 1–236 (MLSLSKNWNT…EQLQLFISFE (236 aa)). An alpha C-terminal domain (alpha-CTD) region spans residues 251–340 (FSPYLLKRVD…LSKRYEDSYN (90 aa)).

The protein belongs to the RNA polymerase alpha chain family. Homodimer. The RNAP catalytic core consists of 2 alpha, 1 beta, 1 beta' and 1 omega subunit. When a sigma factor is associated with the core the holoenzyme is formed, which can initiate transcription.

The enzyme catalyses RNA(n) + a ribonucleoside 5'-triphosphate = RNA(n+1) + diphosphate. In terms of biological role, DNA-dependent RNA polymerase catalyzes the transcription of DNA into RNA using the four ribonucleoside triphosphates as substrates. In Rickettsia akari (strain Hartford), this protein is DNA-directed RNA polymerase subunit alpha.